Reading from the N-terminus, the 294-residue chain is Protoheme IX farnesyltransferase (294 aa).

The next 9 helical transmembrane spans lie at 24–44 (VVLL…PGWV), 48–68 (LIAF…AINH), 96–116 (ALWF…LFVN), 118–138 (LTAL…TGYL), 145–165 (NIVI…TAVT), 172–192 (ALLL…ALAI), 211–231 (GIQF…VVSL), 241–263 (WIYL…KLYF), and 268–288 (VVAM…FVFL).

Belongs to the UbiA prenyltransferase family. Protoheme IX farnesyltransferase subfamily.

The protein localises to the cell inner membrane. The catalysed reaction is heme b + (2E,6E)-farnesyl diphosphate + H2O = Fe(II)-heme o + diphosphate. It functions in the pathway porphyrin-containing compound metabolism; heme O biosynthesis; heme O from protoheme: step 1/1. Its function is as follows. Converts heme B (protoheme IX) to heme O by substitution of the vinyl group on carbon 2 of heme B porphyrin ring with a hydroxyethyl farnesyl side group. This is Protoheme IX farnesyltransferase from Legionella pneumophila (strain Lens).